The chain runs to 426 residues: Serine protease HTRA2, mitochondrial (426 aa).

Low complexity predominate over residues 31 to 58 (SSTCNSTNTDNGSHNTNYNSSNNNNNNN). Residues 31–59 (SSTCNSTNTDNGSHNTNYNSSNNNNNNND) are disordered. Residues 71 to 87 (FLVPFSLGALASSVVAG) traverse the membrane as a helical segment. The short motif at 79–82 (ALAS) is the IAP-binding element. The tract at residues 143–306 (SNGSGFVIEQ…IPIDYVKLFL (164 aa)) is serine protease. Residues His161, Asp193, and Ser270 each act as charge relay system in the active site. In terms of domain architecture, PDZ spans 329–414 (MGITMLTLTP…DLDMVILRGV (86 aa)).

This sequence belongs to the peptidase S1C family. In terms of assembly, interacts with th/DIAP1 (via BIR 2 domain).

The protein resides in the mitochondrion intermembrane space. Its subcellular location is the mitochondrion membrane. The enzyme catalyses Cleavage of non-polar aliphatic amino-acids at the P1 position, with a preference for Val, Ile and Met. At the P2 and P3 positions, Arg is selected most strongly with a secondary preference for other hydrophilic residues.. Its function is as follows. Serine protease that shows proteolytic activity against a non-specific substrate beta-casein. Promotes or induces cell death either by direct binding to and inhibition of BIRC proteins (also called inhibitor of apoptosis proteins, IAPs), leading to an increase in caspase activity, or by a BIRC inhibition-independent, caspase-independent and serine protease activity-dependent mechanism. Can antagonize antiapoptotic activity of th/Diap1 by directly inducing the degradation of th/Diap1. This chain is Serine protease HTRA2, mitochondrial, found in Drosophila grimshawi (Hawaiian fruit fly).